A 968-amino-acid chain; its full sequence is Phosphoenolpyruvate carboxylase 3 (968 aa).

At Ser11 the chain carries Phosphoserine. Active-site residues include His173 and Lys603. Residue Ser705 is modified to Phosphoserine.

It belongs to the PEPCase type 1 family. Homotetramer. It depends on Mg(2+) as a cofactor. Expressed in roots and siliques, and to a lower extent in stems, leaves and flowers.

The protein localises to the cytoplasm. The catalysed reaction is oxaloacetate + phosphate = phosphoenolpyruvate + hydrogencarbonate. Its activity is regulated as follows. By light-reversible phosphorylation. Through the carboxylation of phosphoenolpyruvate (PEP) it forms oxaloacetate, a four-carbon dicarboxylic acid source for the tricarboxylic acid cycle. In Arabidopsis thaliana (Mouse-ear cress), this protein is Phosphoenolpyruvate carboxylase 3 (PPC3).